A 141-amino-acid chain; its full sequence is Decarboxylase CPUR_05434 (141 aa).

Residues 26–121 (EGMSEEAYRN…MHDHEMFADT (96 aa)) enclose the EthD domain.

It belongs to the tpcK family.

It catalyses the reaction atrochrysone carboxylate + H(+) = atrochrysone + CO2. In terms of biological role, decarboxylase; part of the ergochrome gene cluster responsible for the typical purple-black color of the ergot sclerotia. The ergochrome gene cluster produces several ergot pigments including the yellow ergochrome secalonic acid and its derivatives, as well as the red anthraquinones endocrocin and clavorubin. The pathway begins with the synthesis of atrochrysone thioester by the polyketide synthase (PKS) CPUR_05437. The atrochrysone carboxyl ACP thioesterase CPUR_05436 then breaks the thioester bond and releases the atrochrysone carboxylic acid from CPUR_05437. The decarboxylase CPUR_05434 then catalyzes the concerted decarboxylation-elimination required to convert atochrysone carboxylic acid into emodin anthrone, which is further oxidized to emodin by the anthrone oxygenase CPUR_05435. Emodin is further modified to yield monodictyphenone via several steps involving CPUR_05427, CPUR_05428, CPUR_05429 and CPUR_05430. The short chain dehydrogenase/reductase CPUR_05418 then catalyzes the C-5 ketoreduction to give the xanthone skeleton of the monomeric units. Ergochromes formation requires further dimerization steps of different xanthone units, probably catalyzed by the cytochrome P450 monooxygenase CPUR_05419. CPUR_05425, CPUR_05426 and CPUR_05431 are unique to Claviceps, thus it is likely that they are involved in further modification of xanthone units or in their dimerization. The yellow ergochromes and the red anthraquinone pigments endocrocin and clavorubin are products from the same PKS derived precursors and the latter are likely shunt products in the pathway of xanthone biosynthesis. It is proposed that atrochrysone carboxylic acid released from the PKS CPUR_05437 can also be converted to endocrocin anthrone which is further oxidized into endocrocin by CPUR_05435. Endocrocin could be then modified to clavorubin, possibly by CPUR_05423 and CPUR_05431. Clavorubin is the principal anthraquinone metabolite produced by the cluster with a much higher yield compared to endocrocin. This chain is Decarboxylase CPUR_05434, found in Claviceps purpurea (strain 20.1) (Ergot fungus).